We begin with the raw amino-acid sequence, 346 residues long: Protein tas (346 aa).

Tyr-53 serves as the catalytic Proton donor. 234 to 244 is a binding site for NADP(+); the sequence is SCLGFGTLTGK.

Belongs to the aldo/keto reductase family. Aldo/keto reductase 2 subfamily.

The protein is Protein tas (tas) of Escherichia coli (strain K12).